The sequence spans 592 residues: Aspartate--tRNA(Asp/Asn) ligase (592 aa).

An L-aspartate-binding site is contributed by glutamate 175. Positions 199–202 are aspartate; sequence QQFK. Residues arginine 221 and histidine 451 each contribute to the L-aspartate site. 221 to 223 contacts ATP; sequence RDE. Position 485 (glutamate 485) interacts with ATP. Arginine 492 contributes to the L-aspartate binding site. Residue 537–540 participates in ATP binding; sequence GIDR.

Belongs to the class-II aminoacyl-tRNA synthetase family. Type 1 subfamily. As to quaternary structure, homodimer.

It is found in the cytoplasm. It carries out the reaction tRNA(Asx) + L-aspartate + ATP = L-aspartyl-tRNA(Asx) + AMP + diphosphate. Aspartyl-tRNA synthetase with relaxed tRNA specificity since it is able to aspartylate not only its cognate tRNA(Asp) but also tRNA(Asn). Reaction proceeds in two steps: L-aspartate is first activated by ATP to form Asp-AMP and then transferred to the acceptor end of tRNA(Asp/Asn). This chain is Aspartate--tRNA(Asp/Asn) ligase, found in Phenylobacterium zucineum (strain HLK1).